Consider the following 449-residue polypeptide: UPF0761 membrane protein Cpha266_1653 (449 aa).

Helical transmembrane passes span 77–97, 133–153, 173–193, 214–234, 244–264, and 277–297; these read LLSLVPLLSVTLSILRVFPVF, SVPLLGVVFLFIIALSLISTI, FTLYWTVLTLGPVLIGSSLVA, LLSFLPFLNSVIAFFLLYMLV, AVYGSLLAAVLFELSKKWFVF, and GALSVIPMLFFWIYLEWVVVL.

This sequence belongs to the UPF0761 family.

The protein resides in the cell inner membrane. This chain is UPF0761 membrane protein Cpha266_1653, found in Chlorobium phaeobacteroides (strain DSM 266 / SMG 266 / 2430).